The following is a 473-amino-acid chain: Photosystem II CP43 reaction center protein (473 aa).

Residues 1-14 (MKTLYSLRRFYPVE) constitute a propeptide that is removed on maturation. Position 15 is an N-acetylthreonine (Thr-15). Thr-15 bears the Phosphothreonine mark. A run of 5 helical transmembrane segments spans residues 69 to 93 (LFEV…PHLA), 134 to 155 (LLGP…KDRN), 178 to 200 (KALY…RKIT), 255 to 275 (KPFA…LSYS), and 291 to 312 (WFNN…ASQA). Glu-367 serves as a coordination point for [CaMn4O5] cluster. A helical transmembrane segment spans residues 447-471 (RARAAAAGFEKGIDRDFEPVLSMTP).

The protein belongs to the PsbB/PsbC family. PsbC subfamily. As to quaternary structure, PSII is composed of 1 copy each of membrane proteins PsbA, PsbB, PsbC, PsbD, PsbE, PsbF, PsbH, PsbI, PsbJ, PsbK, PsbL, PsbM, PsbT, PsbX, PsbY, PsbZ, Psb30/Ycf12, at least 3 peripheral proteins of the oxygen-evolving complex and a large number of cofactors. It forms dimeric complexes. The cofactor is Binds multiple chlorophylls and provides some of the ligands for the Ca-4Mn-5O cluster of the oxygen-evolving complex. It may also provide a ligand for a Cl- that is required for oxygen evolution. PSII binds additional chlorophylls, carotenoids and specific lipids..

Its subcellular location is the plastid. The protein resides in the chloroplast thylakoid membrane. One of the components of the core complex of photosystem II (PSII). It binds chlorophyll and helps catalyze the primary light-induced photochemical processes of PSII. PSII is a light-driven water:plastoquinone oxidoreductase, using light energy to abstract electrons from H(2)O, generating O(2) and a proton gradient subsequently used for ATP formation. The chain is Photosystem II CP43 reaction center protein from Drimys granadensis.